A 511-amino-acid polypeptide reads, in one-letter code: GMP synthase [glutamine-hydrolyzing] (511 aa).

A Glutamine amidotransferase type-1 domain is found at Asp5–Ile195. Cys82 (nucleophile) is an active-site residue. Residues His169 and Glu171 contribute to the active site. The region spanning Trp196–Arg386 is the GMPS ATP-PPase domain. Ser223–Ser229 is an ATP binding site.

As to quaternary structure, homodimer.

It carries out the reaction XMP + L-glutamine + ATP + H2O = GMP + L-glutamate + AMP + diphosphate + 2 H(+). Its pathway is purine metabolism; GMP biosynthesis; GMP from XMP (L-Gln route): step 1/1. Catalyzes the synthesis of GMP from XMP. In Campylobacter jejuni subsp. jejuni serotype O:2 (strain ATCC 700819 / NCTC 11168), this protein is GMP synthase [glutamine-hydrolyzing] (guaA).